The primary structure comprises 32 residues: Hemocyanin C chain (32 aa).

This sequence belongs to the tyrosinase family. Hemocyanin subfamily. Hemolymph.

It is found in the secreted. Its subcellular location is the extracellular space. Hemocyanins are copper-containing oxygen carriers occurring freely dissolved in the hemolymph of many mollusks and arthropods. The polypeptide is Hemocyanin C chain (Cherax destructor (Common yabby crayfish)).